The sequence spans 341 residues: MEKSISSLQQQINAAPLNSEADIESFRLLYTVRKGLIAALFSQLKSVDPTDRPRIGNLLNQLKESAEARIAEAAESISHHEESSQPVIDLTLPGRVSFTGSEHPVQKVLGEMKRIFSAMGFAMATGPELELDSYNFDMLNFPPDHPARDMQDTFFIKRNGNEDDVLLRTHTSPVQVRVMLEEPPPIRVICPGKVYRNEAISSRSYCVFHQLEGLYIDKGVTFADLKATIYSFAHQMFGSDVKLRFRPSFFPFTEPSAEVDVTCYLCGGKGCKVCKKSGWLEIMGCGMVHPNVIQNCGIDPEVWSGYAFGMGVDRTVLLHYKIDDIRLLFENDIRMLRQFTA.

Position 254 (E254) interacts with Mg(2+).

Belongs to the class-II aminoacyl-tRNA synthetase family. Phe-tRNA synthetase alpha subunit type 1 subfamily. As to quaternary structure, tetramer of two alpha and two beta subunits. Mg(2+) serves as cofactor.

The protein localises to the cytoplasm. It catalyses the reaction tRNA(Phe) + L-phenylalanine + ATP = L-phenylalanyl-tRNA(Phe) + AMP + diphosphate + H(+). The sequence is that of Phenylalanine--tRNA ligase alpha subunit from Chlorobium phaeovibrioides (strain DSM 265 / 1930) (Prosthecochloris vibrioformis (strain DSM 265)).